We begin with the raw amino-acid sequence, 443 residues long: Probable nitrate/nitrite antiporter NarK1 (443 aa).

12 helical membrane-spanning segments follow: residues 23–43 (TLAF…GVPI), 56–76 (WISA…GILA), 79–99 (YGGR…AYLV), 108–128 (LLLY…GIAW), 142–164 (LGVF…ALIA), 182–202 (FIPF…WFGT), 230–250 (FSLY…WLPK), 255–275 (VFGL…FPAS), 298–318 (FGII…IVLY), 329–349 (FTMG…GMGI), 368–388 (AVGG…PPLF), and 401–421 (TFFV…LTVL).

Belongs to the major facilitator superfamily. Nitrate/nitrite porter (TC 2.A.1.8) family.

The protein localises to the cell membrane. The catalysed reaction is nitrate(in) + nitrite(out) = nitrate(out) + nitrite(in). Functionally, probable nitrate/nitrite antiporter that may be involved in nitrate import and nitrite export during anaerobic growth. In Thermus thermophilus, this protein is Probable nitrate/nitrite antiporter NarK1.